A 99-amino-acid polypeptide reads, in one-letter code: Large ribosomal subunit protein bL27 (99 aa).

Residues 1–9 (MLIMNLQLF) constitute a propeptide that is removed on maturation.

It belongs to the bacterial ribosomal protein bL27 family. The N-terminus is cleaved by ribosomal processing cysteine protease Prp.

This chain is Large ribosomal subunit protein bL27, found in Clostridium beijerinckii (strain ATCC 51743 / NCIMB 8052) (Clostridium acetobutylicum).